A 352-amino-acid polypeptide reads, in one-letter code: N-acetyl-gamma-glutamyl-phosphate reductase (352 aa).

Residue Cys155 is part of the active site.

This sequence belongs to the NAGSA dehydrogenase family. Type 1 subfamily.

Its subcellular location is the cytoplasm. The enzyme catalyses N-acetyl-L-glutamate 5-semialdehyde + phosphate + NADP(+) = N-acetyl-L-glutamyl 5-phosphate + NADPH + H(+). The protein operates within amino-acid biosynthesis; L-arginine biosynthesis; N(2)-acetyl-L-ornithine from L-glutamate: step 3/4. Catalyzes the NADPH-dependent reduction of N-acetyl-5-glutamyl phosphate to yield N-acetyl-L-glutamate 5-semialdehyde. The polypeptide is N-acetyl-gamma-glutamyl-phosphate reductase (Picosynechococcus sp. (strain ATCC 27264 / PCC 7002 / PR-6) (Agmenellum quadruplicatum)).